The chain runs to 195 residues: Sec-independent protein translocase protein TatB (195 aa).

Residues 1 to 21 (MFDIGFSELVLIFIVGLVVLG) traverse the membrane as a helical segment. The tract at residues 166-195 (DESQFAAYYPPDDDLASPTPSQPQDKQNVS) is disordered. Positions 183 to 195 (PTPSQPQDKQNVS) are enriched in polar residues.

The protein belongs to the TatB family. The Tat system comprises two distinct complexes: a TatABC complex, containing multiple copies of TatA, TatB and TatC subunits, and a separate TatA complex, containing only TatA subunits. Substrates initially bind to the TatABC complex, which probably triggers association of the separate TatA complex to form the active translocon.

It is found in the cell inner membrane. Functionally, part of the twin-arginine translocation (Tat) system that transports large folded proteins containing a characteristic twin-arginine motif in their signal peptide across membranes. Together with TatC, TatB is part of a receptor directly interacting with Tat signal peptides. TatB may form an oligomeric binding site that transiently accommodates folded Tat precursor proteins before their translocation. The polypeptide is Sec-independent protein translocase protein TatB (Actinobacillus pleuropneumoniae serotype 5b (strain L20)).